The following is a 131-amino-acid chain: Class I hydrophobin 9 (131 aa).

Residues 1 to 23 form the signal peptide; that stretch reads MFARRAISIFAFMLVALSIFAAA. 4 disulfides stabilise this stretch: C52-C112, C59-C106, C60-C93, and C113-C126. A glycan (N-linked (GlcNAc...) asparagine) is linked at N53. A glycan (N-linked (GlcNAc...) asparagine) is linked at N115.

This sequence belongs to the fungal hydrophobin family. As to quaternary structure, self-assembles to form functional amyloid fibrils called rodlets. Self-assembly into fibrillar rodlets occurs spontaneously at hydrophobic:hydrophilic interfaces and the rodlets further associate laterally to form amphipathic monolayers.

Its subcellular location is the secreted. The protein localises to the cell wall. Aerial growth, conidiation, and dispersal of filamentous fungi in the environment rely upon a capability of their secreting small amphipathic proteins called hydrophobins (HPBs) with low sequence identity. Class I can self-assemble into an outermost layer of rodlet bundles on aerial cell surfaces, conferring cellular hydrophobicity that supports fungal growth, development and dispersal; whereas Class II form highly ordered films at water-air interfaces through intermolecular interactions but contribute nothing to the rodlet structure. This Flammulina velutipes (Agaricus velutipes) protein is Class I hydrophobin 9.